We begin with the raw amino-acid sequence, 146 residues long: Snaclec stejaggregin-B subunit beta-2 (146 aa).

A signal peptide spans 1–23; it reads MGRFIFVSFGLLVVFLSLSGSGA. The C-type lectin domain maps to 32-143; it reads YDLYCYRVFQ…CSQTYPFVCK (112 aa). 2 disulfides stabilise this stretch: cysteine 53–cysteine 142 and cysteine 119–cysteine 134.

This sequence belongs to the snaclec family. Heteromultimer; disulfide-linked. In terms of tissue distribution, expressed by the venom gland.

It is found in the secreted. Interferes with one step of hemostasis (modulation of platelet aggregation, or coagulation cascade, for example). In Trimeresurus stejnegeri (Chinese green tree viper), this protein is Snaclec stejaggregin-B subunit beta-2.